The sequence spans 74 residues: Translation initiation factor IF-1 (74 aa).

Residues 1–72 enclose the S1-like domain; that stretch reads MGKEDVIRME…TRGRIVYRKK (72 aa).

This sequence belongs to the IF-1 family. In terms of assembly, component of the 30S ribosomal translation pre-initiation complex which assembles on the 30S ribosome in the order IF-2 and IF-3, IF-1 and N-formylmethionyl-tRNA(fMet); mRNA recruitment can occur at any time during PIC assembly.

It localises to the cytoplasm. Its function is as follows. One of the essential components for the initiation of protein synthesis. Stabilizes the binding of IF-2 and IF-3 on the 30S subunit to which N-formylmethionyl-tRNA(fMet) subsequently binds. Helps modulate mRNA selection, yielding the 30S pre-initiation complex (PIC). Upon addition of the 50S ribosomal subunit IF-1, IF-2 and IF-3 are released leaving the mature 70S translation initiation complex. The polypeptide is Translation initiation factor IF-1 (Thermotoga petrophila (strain ATCC BAA-488 / DSM 13995 / JCM 10881 / RKU-1)).